The primary structure comprises 109 residues: Thiosulfate sulfurtransferase GlpE (109 aa).

The Rhodanese domain maps to 17 to 105 (HQQTAVLVDI…WHRHFPAEVA (89 aa)). The active-site Cysteine persulfide intermediate is Cys65.

It belongs to the GlpE family.

It is found in the cytoplasm. It catalyses the reaction thiosulfate + hydrogen cyanide = thiocyanate + sulfite + 2 H(+). It carries out the reaction thiosulfate + [thioredoxin]-dithiol = [thioredoxin]-disulfide + hydrogen sulfide + sulfite + 2 H(+). In terms of biological role, transferase that catalyzes the transfer of sulfur from thiosulfate to thiophilic acceptors such as cyanide or dithiols. May function in a CysM-independent thiosulfate assimilation pathway by catalyzing the conversion of thiosulfate to sulfite, which can then be used for L-cysteine biosynthesis. The chain is Thiosulfate sulfurtransferase GlpE from Klebsiella pneumoniae (strain 342).